A 327-amino-acid chain; its full sequence is L-lactate dehydrogenase (327 aa).

NAD(+) is bound by residues Val-18, Asp-39, Lys-44, Tyr-69, and 83 to 84 (GA). Residues Gln-86, Arg-92, and 124–127 (NPVD) each bind substrate. NAD(+) contacts are provided by residues 122–124 (AAN) and Ser-147. Residue 152 to 155 (DSAR) coordinates substrate. Beta-D-fructose 1,6-bisphosphate is bound by residues Arg-157 and His-172. Catalysis depends on His-179, which acts as the Proton acceptor. Tyr-224 is modified (phosphotyrosine). A substrate-binding site is contributed by Thr-233.

It belongs to the LDH/MDH superfamily. LDH family. Homotetramer.

It is found in the cytoplasm. It catalyses the reaction (S)-lactate + NAD(+) = pyruvate + NADH + H(+). Its pathway is fermentation; pyruvate fermentation to lactate; (S)-lactate from pyruvate: step 1/1. Allosterically activated by fructose 1,6-bisphosphate (FBP). In terms of biological role, catalyzes the conversion of lactate to pyruvate. The chain is L-lactate dehydrogenase from Streptococcus uberis (strain ATCC BAA-854 / 0140J).